Reading from the N-terminus, the 258-residue chain is Leucyl/phenylalanyl-tRNA--protein transferase (258 aa).

Belongs to the L/F-transferase family.

Its subcellular location is the cytoplasm. It carries out the reaction N-terminal L-lysyl-[protein] + L-leucyl-tRNA(Leu) = N-terminal L-leucyl-L-lysyl-[protein] + tRNA(Leu) + H(+). It catalyses the reaction N-terminal L-arginyl-[protein] + L-leucyl-tRNA(Leu) = N-terminal L-leucyl-L-arginyl-[protein] + tRNA(Leu) + H(+). The enzyme catalyses L-phenylalanyl-tRNA(Phe) + an N-terminal L-alpha-aminoacyl-[protein] = an N-terminal L-phenylalanyl-L-alpha-aminoacyl-[protein] + tRNA(Phe). Functionally, functions in the N-end rule pathway of protein degradation where it conjugates Leu, Phe and, less efficiently, Met from aminoacyl-tRNAs to the N-termini of proteins containing an N-terminal arginine or lysine. This chain is Leucyl/phenylalanyl-tRNA--protein transferase, found in Alkalilimnicola ehrlichii (strain ATCC BAA-1101 / DSM 17681 / MLHE-1).